We begin with the raw amino-acid sequence, 124 residues long: Cholera enterotoxin subunit B (124 aa).

Positions 1–21 (MIKLKFGVFFTVLLSSAYAHG) are cleaved as a signal peptide. A disulfide bridge connects residues Cys30 and Cys107.

As to quaternary structure, the holotoxin (choleragen) consists of a pentameric ring of B subunits whose central pore is occupied by the A subunit. The A subunit contains two chains, A1 and A2, linked by a disulfide bridge.

It localises to the secreted. The protein resides in the host cell membrane. The B subunit pentameric ring directs the A subunit to its target by binding to the GM1 gangliosides present on the surface of the intestinal epithelial cells. It can bind five GM1 gangliosides. It has no toxic activity by itself. The sequence is that of Cholera enterotoxin subunit B (ctxB) from Vibrio cholerae serotype O1 (strain ATCC 39315 / El Tor Inaba N16961).